A 156-amino-acid chain; its full sequence is Hemerythrin-like protein (156 aa).

Fe cation is bound by residues His54, His84, Glu88, His109, His113, His142, and Asp147.

It belongs to the hemerythrin family.

In terms of biological role, oxygen-binding protein. The oxygen-binding site contains two iron atoms. This is Hemerythrin-like protein from Nematostella vectensis (Starlet sea anemone).